The following is a 109-amino-acid chain: uncharacterized protein (109 aa).

A disordered region spans residues 1–25 (METKPNALTGTSLSSTSGQTTQKSI). Over residues 8–22 (LTGTSLSSTSGQTTQ) the composition is skewed to low complexity. A helical transmembrane segment spans residues 42 to 62 (TFGLMAILNLALLLWTLLATL). Positions 84–109 (TTLQKNTPSAKNGLKNTTNKHSHEDM) are disordered. A compositionally biased stretch (polar residues) spans 91 to 102 (PSAKNGLKNTTN).

The protein localises to the host membrane. This is an uncharacterized protein from Bdellovibrio phage phiMH2K (Bacteriophage phiMH2K).